Here is a 230-residue protein sequence, read N- to C-terminus: Androgen-dependent TFPI-regulating protein (230 aa).

Residues 1–7 (MTKTTTC) lie on the Cytoplasmic side of the membrane. Residues 8–28 (VYHFLVLNWYIFLNYHIPQIG) traverse the membrane as a helical segment. Over 29 to 45 (RNEEKLREFHDGGRSKY) the chain is Extracellular. Residues 46–66 (LTLLNLLLQAIFFGVACLDDV) form a helical membrane-spanning segment. The Cytoplasmic segment spans residues 67 to 85 (LKRVIGRKDIKFVTSFRDL). Residues 86–106 (LFTTMAFPISTFVFLVFWTLF) form a helical membrane-spanning segment. The Extracellular segment spans residues 107-120 (HYDRSLVYPKGLDD). Residues 121–141 (FFPAWVNHAMHTSIFPFSLFE) form a helical membrane-spanning segment. The Cytoplasmic segment spans residues 142 to 154 (TILRPHNYPSKKL). A helical transmembrane segment spans residues 155-175 (GLTLLGAFNFAYIIRILWRYV). Topologically, residues 176 to 190 (QTGNWVYPVFDSLSP) are extracellular. The helical transmembrane segment at 191–211 (LGIIIFFSAAYILVAGIYLFG) threads the bilayer. The Cytoplasmic segment spans residues 212–230 (EKINHWKWGAIAKPQMKKN).

The protein belongs to the AIG1 family.

The protein localises to the cell membrane. The catalysed reaction is 9-hexadecanoyloxy-octadecanoate + H2O = 9-hydroxy-octadecanoate + hexadecanoate + H(+). It carries out the reaction 12-hexadecanoyloxy-octadecanoate + H2O = 12-hydroxyoctadecanoate + hexadecanoate + H(+). It catalyses the reaction 9-(9Z-hexadecenoyloxy)-octadecanoate + H2O = (9Z)-hexadecenoate + 9-hydroxy-octadecanoate + H(+). The enzyme catalyses 12-(9Z-hexadecenoyloxy)-octadecanoate + H2O = 12-hydroxyoctadecanoate + (9Z)-hexadecenoate + H(+). The catalysed reaction is 13-(9Z-hexadecenoyloxy)-octadecanoate + H2O = 13-hydroxy-octadecanoate + (9Z)-hexadecenoate + H(+). It carries out the reaction 9-octadecanoyloxy-octadecanoate + H2O = 9-hydroxy-octadecanoate + octadecanoate + H(+). It catalyses the reaction 12-octadecanoyloxy-octadecanoate + H2O = 12-hydroxyoctadecanoate + octadecanoate + H(+). The enzyme catalyses 13-octadecanoyloxy-octadecanoate + H2O = 13-hydroxy-octadecanoate + octadecanoate + H(+). The catalysed reaction is 9-(9Z-octadecenoyloxy)-octadecanoate + H2O = 9-hydroxy-octadecanoate + (9Z)-octadecenoate + H(+). It carries out the reaction 12-(9Z-octadecenoyloxy)-octadecanoate + H2O = 12-hydroxyoctadecanoate + (9Z)-octadecenoate + H(+). It catalyses the reaction 13-(9Z-octadecenoyloxy)-octadecanoate + H2O = 13-hydroxy-octadecanoate + (9Z)-octadecenoate + H(+). The enzyme catalyses 5-(9Z-octadecenoyloxy)-octadecanoate + H2O = 5-hydroxy-octadecanoate + (9Z)-octadecenoate + H(+). Its function is as follows. Hydrolyzes bioactive fatty-acid esters of hydroxy-fatty acids (FAHFAs), but not other major classes of lipids. Shows a preference for FAHFAs with branching distal from the carboxylate head group of the lipids. Regulates the expression and the cell-associated anticoagulant activity of the inhibitor TFPI in endothelial cells (in vitro). The protein is Androgen-dependent TFPI-regulating protein (Adtrp) of Mus musculus (Mouse).